The chain runs to 291 residues: Putative transport permease ycf38 (291 aa).

6 helical membrane-spanning segments follow: residues A47 to F67, S87 to F107, F135 to G155, M165 to L185, L195 to P215, and I262 to V282. The region spanning A47–K289 is the ABC transmembrane type-2 domain.

It belongs to the ABC-2 integral membrane protein family.

The protein localises to the plastid. Its subcellular location is the chloroplast membrane. The sequence is that of Putative transport permease ycf38 (ycf38) from Pyropia yezoensis (Susabi-nori).